The sequence spans 293 residues: Pyridoxal 5'-phosphate synthase subunit PdxS (293 aa).

Residue D23 participates in D-ribose 5-phosphate binding. Catalysis depends on K80, which acts as the Schiff-base intermediate with D-ribose 5-phosphate. G152 is a D-ribose 5-phosphate binding site. A D-glyceraldehyde 3-phosphate-binding site is contributed by R164. D-ribose 5-phosphate-binding positions include G213 and 234-235 (GS).

Belongs to the PdxS/SNZ family. As to quaternary structure, in the presence of PdxT, forms a dodecamer of heterodimers.

The catalysed reaction is aldehydo-D-ribose 5-phosphate + D-glyceraldehyde 3-phosphate + L-glutamine = pyridoxal 5'-phosphate + L-glutamate + phosphate + 3 H2O + H(+). It functions in the pathway cofactor biosynthesis; pyridoxal 5'-phosphate biosynthesis. Its function is as follows. Catalyzes the formation of pyridoxal 5'-phosphate from ribose 5-phosphate (RBP), glyceraldehyde 3-phosphate (G3P) and ammonia. The ammonia is provided by the PdxT subunit. Can also use ribulose 5-phosphate and dihydroxyacetone phosphate as substrates, resulting from enzyme-catalyzed isomerization of RBP and G3P, respectively. This chain is Pyridoxal 5'-phosphate synthase subunit PdxS, found in Roseiflexus sp. (strain RS-1).